Here is a 304-residue protein sequence, read N- to C-terminus: Deoxyribonuclease-1-like 1 (304 aa).

The first 24 residues, 1 to 24 (MPYMAMHGLTVALLLIFLAGGTEA), serve as a signal peptide directing secretion. An N-linked (GlcNAc...) asparagine glycan is attached at Asn92. Glu103 is a catalytic residue. The N-linked (GlcNAc...) asparagine glycan is linked to Asn123. Residue His154 is part of the active site. Cys193 and Cys230 are oxidised to a cystine. An N-linked (GlcNAc...) asparagine glycan is attached at Asn229.

This sequence belongs to the DNase I family.

It is found in the endoplasmic reticulum. This is Deoxyribonuclease-1-like 1 (DNASE1L1) from Cricetulus griseus (Chinese hamster).